We begin with the raw amino-acid sequence, 183 residues long: Probable RNA 2'-phosphotransferase (183 aa).

This sequence belongs to the KptA/TPT1 family.

Its function is as follows. Removes the 2'-phosphate from RNA via an intermediate in which the phosphate is ADP-ribosylated by NAD followed by a presumed transesterification to release the RNA and generate ADP-ribose 1''-2''-cyclic phosphate (APPR&gt;P). May function as an ADP-ribosylase. In Pyrococcus furiosus (strain ATCC 43587 / DSM 3638 / JCM 8422 / Vc1), this protein is Probable RNA 2'-phosphotransferase.